Consider the following 880-residue polypeptide: Translation initiation factor IF-2 (880 aa).

The span at 143–228 (EAEAKAKAKA…EAERNGDHHI (86 aa)) shows a compositional bias: basic and acidic residues. Positions 143–289 (EAEAKAKAKA…APESMAHGFN (147 aa)) are disordered. Positions 249–262 (GRRARNKSNAKKRG) are enriched in basic residues. One can recognise a tr-type G domain in the interval 380-549 (SRAPVVTIMG…LLQAEVLELK (170 aa)). Positions 389–396 (GHVDHGKT) are G1. 389–396 (GHVDHGKT) lines the GTP pocket. The interval 414 to 418 (GITQH) is G2. Positions 435–438 (DTPG) are G3. Residues 435 to 439 (DTPGH) and 489 to 492 (NKMD) each bind GTP. Residues 489–492 (NKMD) form a G4 region. A G5 region spans residues 525–527 (SAK).

Belongs to the TRAFAC class translation factor GTPase superfamily. Classic translation factor GTPase family. IF-2 subfamily.

It localises to the cytoplasm. One of the essential components for the initiation of protein synthesis. Protects formylmethionyl-tRNA from spontaneous hydrolysis and promotes its binding to the 30S ribosomal subunits. Also involved in the hydrolysis of GTP during the formation of the 70S ribosomal complex. The protein is Translation initiation factor IF-2 of Shewanella putrefaciens (strain CN-32 / ATCC BAA-453).